Consider the following 279-residue polypeptide: Protease HtpX homolog (279 aa).

2 helical membrane-spanning segments follow: residues 6–26 (VFVLMAGLTGLVVAIGQALGG) and 29–49 (GAILALLLSAGMNLFMYWGSS). His-130 contacts Zn(2+). The active site involves Glu-131. His-134 serves as a coordination point for Zn(2+). 2 helical membrane-spanning segments follow: residues 145-165 (IAATMAGAVSNLAQFAFFFGG) and 176-196 (VAGIAMLIIGPIVAMVIQFAI). Glu-201 serves as a coordination point for Zn(2+).

It belongs to the peptidase M48B family. Zn(2+) is required as a cofactor.

Its subcellular location is the cell inner membrane. The polypeptide is Protease HtpX homolog (Gemmatimonas aurantiaca (strain DSM 14586 / JCM 11422 / NBRC 100505 / T-27)).